Reading from the N-terminus, the 323-residue chain is tRNA U34 carboxymethyltransferase (323 aa).

Residues lysine 90, tryptophan 104, lysine 109, glycine 129, 182–183, methionine 197, tyrosine 201, and arginine 316 each bind carboxy-S-adenosyl-L-methionine; that span reads IE.

Belongs to the class I-like SAM-binding methyltransferase superfamily. CmoB family. In terms of assembly, homotetramer.

The catalysed reaction is carboxy-S-adenosyl-L-methionine + 5-hydroxyuridine(34) in tRNA = 5-carboxymethoxyuridine(34) in tRNA + S-adenosyl-L-homocysteine + H(+). Its function is as follows. Catalyzes carboxymethyl transfer from carboxy-S-adenosyl-L-methionine (Cx-SAM) to 5-hydroxyuridine (ho5U) to form 5-carboxymethoxyuridine (cmo5U) at position 34 in tRNAs. This is tRNA U34 carboxymethyltransferase from Idiomarina loihiensis (strain ATCC BAA-735 / DSM 15497 / L2-TR).